The primary structure comprises 298 residues: Formamidopyrimidine-DNA glycosylase (298 aa).

P2 serves as the catalytic Schiff-base intermediate with DNA. The active-site Proton donor is E3. The Proton donor; for beta-elimination activity role is filled by K58. Residues H106, R128, and K171 each coordinate DNA. An FPG-type zinc finger spans residues 262–298; it reads SVYDQEGQPCRTPGCGGTVERVVQAGRSTFYCAACQK. R288 serves as the catalytic Proton donor; for delta-elimination activity.

Belongs to the FPG family. In terms of assembly, monomer. Requires Zn(2+) as cofactor.

It carries out the reaction Hydrolysis of DNA containing ring-opened 7-methylguanine residues, releasing 2,6-diamino-4-hydroxy-5-(N-methyl)formamidopyrimidine.. The enzyme catalyses 2'-deoxyribonucleotide-(2'-deoxyribose 5'-phosphate)-2'-deoxyribonucleotide-DNA = a 3'-end 2'-deoxyribonucleotide-(2,3-dehydro-2,3-deoxyribose 5'-phosphate)-DNA + a 5'-end 5'-phospho-2'-deoxyribonucleoside-DNA + H(+). Involved in base excision repair of DNA damaged by oxidation or by mutagenic agents. Acts as a DNA glycosylase that recognizes and removes damaged bases. Has a preference for oxidized purines, such as 7,8-dihydro-8-oxoguanine (8-oxoG). Has AP (apurinic/apyrimidinic) lyase activity and introduces nicks in the DNA strand. Cleaves the DNA backbone by beta-delta elimination to generate a single-strand break at the site of the removed base with both 3'- and 5'-phosphates. This Agrobacterium fabrum (strain C58 / ATCC 33970) (Agrobacterium tumefaciens (strain C58)) protein is Formamidopyrimidine-DNA glycosylase (mutM).